The chain runs to 132 residues: MRLPLQLSILTLAWVWAVALEIPMSAVVKETLIQLSTHRALLTSNETVRLPVPTHKNHQLCIGEIFQGLDILKNQTARGGAVETLFQNLSLIKKYIDRQKEKCGEERRRARQFLDYLQEFLGVMSTEWTMEG.

A signal peptide spans 1 to 17; sequence MRLPLQLSILTLAWVWA. Asparagine 45, asparagine 74, and asparagine 88 each carry an N-linked (GlcNAc...) asparagine glycan.

Belongs to the IL-5 family. In terms of assembly, homodimer; disulfide-linked. Interacts with IL5RA. Interacts with CSF2RB.

It is found in the secreted. Homodimeric cytokine expressed predominantly by T-lymphocytes and NK cells that plays an important role in the survival, differentiation, and chemotaxis of eosinophils. Also acts on activated and resting B-cells to induce immunoglobulin production, growth, and differentiation. Mechanistically, exerts its biological effects through a receptor composed of IL5RA subunit and the cytokine receptor common subunit beta/CSF2RB. Binding to the receptor leads to activation of various kinases including LYN, SYK and JAK2 and thereby propagates signals through the RAS-MAPK and JAK-STAT5 pathways respectively. The protein is Interleukin-5 (IL5) of Meriones unguiculatus (Mongolian jird).